We begin with the raw amino-acid sequence, 154 residues long: Ribosomal RNA large subunit methyltransferase H (154 aa).

Residues Gly103 and 122-127 each bind S-adenosyl-L-methionine; that span reads FSKLTF.

It belongs to the RNA methyltransferase RlmH family. Homodimer.

The protein localises to the cytoplasm. The catalysed reaction is pseudouridine(1915) in 23S rRNA + S-adenosyl-L-methionine = N(3)-methylpseudouridine(1915) in 23S rRNA + S-adenosyl-L-homocysteine + H(+). In terms of biological role, specifically methylates the pseudouridine at position 1915 (m3Psi1915) in 23S rRNA. The polypeptide is Ribosomal RNA large subunit methyltransferase H (Caldicellulosiruptor bescii (strain ATCC BAA-1888 / DSM 6725 / KCTC 15123 / Z-1320) (Anaerocellum thermophilum)).